Consider the following 335-residue polypeptide: Serpentine receptor class alpha-13 (335 aa).

Residues 1 to 25 are Extracellular-facing; sequence MAIISSVNRTCASESLLELYRSYKY. Residues 26–46 traverse the membrane as a helical segment; the sequence is ILSTSFNIIIPIISLFFLVYA. Residues 47-61 are Cytoplasmic-facing; the sequence is IKQLCAQSIIQYSTR. A helical transmembrane segment spans residues 62-82; the sequence is VLLITTILFAVCHQIAYFCFK. Topologically, residues 83-108 are extracellular; the sequence is ADLLYTMLFKLDQPCNLQHSSYDCRF. The helical transmembrane segment at 109-129 threads the bilayer; the sequence is ITIATTTSNCGMALVQLAMSI. At 130 to 146 the chain is on the cytoplasmic side; sequence DRVFALKFNRVYYKLKS. A helical membrane pass occupies residues 147-167; sequence IPGITLALITLSISFSMFFIL. Over 168 to 192 the chain is Extracellular; the sequence is TIDDPLSGYVNHCGFYPTYSQDKFH. The chain crosses the membrane as a helical span at residues 193-213; that stretch reads IFLDVTLYLAVFNFVFDIGLM. Residues 214-243 are Cytoplasmic-facing; that stretch reads YYSYQEILWKRSYSFVNRFQSRISLKCTQA. Residues 244-264 form a helical membrane-spanning segment; sequence IFIISICQCISNVLYSGLLSL. Residues 265-278 lie on the Extracellular side of the membrane; the sequence is LMKLGRYMSSADYN. Residues 279 to 299 traverse the membrane as a helical segment; that stretch reads LSLSLAYTTPYSCLILPILIC. At 300 to 335 the chain is on the cytoplasmic side; sequence KVLEYIKKQRTVGILSLRNQKQSMEGHMAMINSAWK.

Belongs to the nematode receptor-like protein sra family. Expressed in the AWA and AWC chemosensory neurons.

It localises to the membrane. Its function is as follows. Chemosensory receptor that negatively regulates RAS/MAPK signaling during vulva induction and the negative regulation of olfaction of volitile attractants. Required for the suppression of vulval induction in response to food starvation. Signaling acts through the GPA-5 G-alpha protein subunit. The sequence is that of Serpentine receptor class alpha-13 (sra-13) from Caenorhabditis elegans.